We begin with the raw amino-acid sequence, 587 residues long: Probable terpene synthase 12 (587 aa).

Positions 338, 342, and 489 each coordinate Mg(2+). The DDXXD motif signature appears at D338–D342.

Belongs to the terpene synthase family. It depends on Mg(2+) as a cofactor.

Its function is as follows. Probable sesquiterpene synthase. This chain is Probable terpene synthase 12 (TPS12), found in Ricinus communis (Castor bean).